The primary structure comprises 185 residues: Large ribosomal subunit protein uL5 (185 aa).

Belongs to the universal ribosomal protein uL5 family. In terms of assembly, part of the 50S ribosomal subunit; part of the 5S rRNA/L5/L18/L25 subcomplex. Contacts the 5S rRNA and the P site tRNA. Forms a bridge to the 30S subunit in the 70S ribosome.

Functionally, this is one of the proteins that bind and probably mediate the attachment of the 5S RNA into the large ribosomal subunit, where it forms part of the central protuberance. In the 70S ribosome it contacts protein S13 of the 30S subunit (bridge B1b), connecting the 2 subunits; this bridge is implicated in subunit movement. Contacts the P site tRNA; the 5S rRNA and some of its associated proteins might help stabilize positioning of ribosome-bound tRNAs. The sequence is that of Large ribosomal subunit protein uL5 from Sinorhizobium medicae (strain WSM419) (Ensifer medicae).